We begin with the raw amino-acid sequence, 115 residues long: UPF0738 protein SAB0871 (115 aa).

Belongs to the UPF0738 family.

In Staphylococcus aureus (strain bovine RF122 / ET3-1), this protein is UPF0738 protein SAB0871.